Consider the following 330-residue polypeptide: 3'-5' exonuclease (330 aa).

Residues 1 to 92 (MDQYLIKMST…DGTPSPEKEI (92 aa)) are disordered. Composition is skewed to basic and acidic residues over residues 27–39 (NTTR…KEKI) and 48–66 (KDTP…ENPP). Phosphoserine is present on residues Ser79 and Ser87. Residues 117–289 (SADEVMQWVE…IGQVIYRDIE (173 aa)) form the 3'-5' exonuclease domain. Mg(2+) is bound by residues Asp139, Glu141, and Asp277.

The protein belongs to the WRNexo family.

Its subcellular location is the nucleus. Has exonuclease activity on both single-stranded and duplex templates bearing overhangs, but not blunt ended duplex DNA, and cleaves in a 3'-5' direction. Essential for the formation of DNA replication focal centers. Has an important role in maintaining genome stability. This is 3'-5' exonuclease from Drosophila virilis (Fruit fly).